The sequence spans 335 residues: UPF0353 protein MAP_1207 (335 aa).

2 helical membrane-spanning segments follow: residues 18–38 and 67–87; these read WFFL…LMQL and LPAI…AGPT. The 197-residue stretch at 98–294 folds into the VWFA domain; the sequence is VVMLVIDVSQ…QELKSVYATL (197 aa). The chain crosses the membrane as a helical span at residues 309-329; the sequence is VGWVRLGALVLALAALTALLI.

It belongs to the UPF0353 family.

The protein localises to the cell membrane. The sequence is that of UPF0353 protein MAP_1207 from Mycolicibacterium paratuberculosis (strain ATCC BAA-968 / K-10) (Mycobacterium paratuberculosis).